Reading from the N-terminus, the 181-residue chain is Adenylyl-sulfate kinase (181 aa).

20–27 (GLSGAGKS) contacts ATP. Ser94 serves as the catalytic Phosphoserine intermediate.

It belongs to the APS kinase family.

The catalysed reaction is adenosine 5'-phosphosulfate + ATP = 3'-phosphoadenylyl sulfate + ADP + H(+). The protein operates within sulfur metabolism; hydrogen sulfide biosynthesis; sulfite from sulfate: step 2/3. Catalyzes the synthesis of activated sulfate. The chain is Adenylyl-sulfate kinase from Deinococcus geothermalis (strain DSM 11300 / CIP 105573 / AG-3a).